The chain runs to 372 residues: Cyclin-dependent kinase 9 (372 aa).

The 297-residue stretch at 19 to 315 (YEKLAKIGQG…SDDALNHDFF (297 aa)) folds into the Protein kinase domain. 25-33 (IGQGTFGEV) lines the ATP pocket. K35 carries the phosphoserine modification. An N6-acetyllysine; by EP300/CBP, PCAF/KAT2B and GCN5/KAT2A modification is found at K44. K48 lines the ATP pocket. K48 is subject to N6-acetyllysine; by PCAF/KAT2B and GCN5/KAT2A. At N54 the chain carries Phosphothreonine. Residue 104 to 106 (DFC) coordinates ATP. Catalysis depends on D149, which acts as the Proton acceptor. Positions 166–191 (ADFGLARAFSLAKNSQPNRYTNRVVT) are T-loop. Residue D167 participates in ATP binding. Residue S175 is modified to Phosphoserine. T186 carries the phosphothreonine; by CaMK1D modification. The segment at 343-372 (RRKGSQITQQSTNQSRNPATTNQTEFERVF) is disordered. Phosphoserine; by CDK9 and PKA is present on S347. Residues 347–366 (SQITQQSTNQSRNPATTNQT) are compositionally biased toward polar residues. A Phosphothreonine; by CDK9 modification is found at T350. Phosphoserine; by CDK9 is present on S353. Residue T354 is modified to Phosphothreonine; by CDK9. At S357 the chain carries Phosphoserine; by CDK9. 2 positions are modified to phosphothreonine; by CDK9: T362 and T363.

This sequence belongs to the protein kinase superfamily. CMGC Ser/Thr protein kinase family. CDC2/CDKX subfamily. In terms of assembly, component of the super elongation complex (SEC), at least composed of EAF1, EAF2, CDK9, MLLT3/AF9, AFF (AFF1 or AFF4), the P-TEFb complex and ELL (ELL, ELL2 or ELL3). Associates with CCNT1/cyclin-T1, CCNT2/cyclin-T2 (isoform A and isoform B) or CCNK/cyclin-K to form active P-TEFb. P-TEFb forms a complex with AFF4/AF5Q31 and is part of the super elongation complex (SEC). Component of a complex which is composed of at least 5 members: HTATSF1/Tat-SF1, P-TEFb complex, RNA pol II, SUPT5H and NCL/nucleolin. Associates with UBR5 and forms a transcription regulatory complex composed of CDK9, RNAP II, UBR5 and TFIIS/TCEA1 that can stimulate target gene transcription (e.g. gamma fibrinogen/FGG) by recruiting their promoters. Component of the 7SK snRNP inactive complex which is composed of at least 8 members: P-TEFb (composed of CDK9 and CCNT1/cyclin-T1), HEXIM1, HEXIM2, LARP7, BCDIN3, SART3 proteins and 7SK and U6 snRNAs. This inactive 7SK snRNP complex can also interact with NCOR1 and HDAC3, probably to regulate CDK9 acetylation. Release of P-TEFb from P-TEFb/7SK snRNP complex requires both PP2B to transduce calcium Ca(2+) signaling in response to stimuli (e.g. UV or hexamethylene bisacetamide (HMBA)) and PPP1CA to dephosphorylate Thr-186. This released P-TEFb remains inactive in the pre-initiation complex with BRD4 until new Thr-186 phosphorylation occurs after the synthesis of a short RNA. Interacts with BRD4; to target chromatin binding. Interacts with JMJD6. Interacts with activated nuclear STAT3 and RELA/p65. Binds to AR and MYOD1. Forms a complex composed of CDK9, CCNT1/cyclin-T1, EP300 and GATA4 that stimulates hypertrophy in cardiomyocytes. The large PER complex involved in the repression of transcriptional termination is composed of at least PER2, CDK9, DDX5, DHX9, NCBP1 and POLR2A. Interacts with HSF1. Interacts with TBX21. Isoform 3: binds to KU70/XRCC6. Interacts with WDR43. Interacts with ZMYND8; the association appears to occur between homodimeric ZMYND8 and the activated form of the P-TEFb complex. (Microbial infection) Interacts with the acidic/proline-rich region of HIV-1 and HIV-2 Tat via T-loop region and is thus required for HIV to hijack host transcription machinery during its replication through cooperative binding to viral TAR RNA. As to quaternary structure, (Microbial infection) Interacts with human herpes virus 1 (HHV-1) protein ICP22; this interaction blocks the recruitment of positive transcription elongation factor b (P-TEFb) to the viral promoter. Autophosphorylation at Thr-186, Ser-347, Thr-350, Ser-353, Thr-354 and Ser-357 triggers kinase activity by promoting cyclin and substrate binding (e.g. HIV TAT) upon conformational changes. Thr-186 phosphorylation requires the calcium Ca(2+) signaling pathway, including CaMK1D and calmodulin. This inhibition is relieved by Thr-29 dephosphorylation. However, phosphorylation at Thr-29 is inhibitory within the HIV transcription initiation complex. Phosphorylation at Ser-175 inhibits kinase activity. Can be phosphorylated on either Thr-362 or Thr-363 but not on both simultaneously. In terms of processing, dephosphorylation of Thr-186 by PPM1A and PPM1B blocks CDK9 activity and may lead to CDK9 proteasomal degradation. However, PPP1CA-mediated Thr-186 dephosphorylation is required to release P-TEFb from its inactive P-TEFb/7SK snRNP complex. Dephosphorylated at Ser-347 by the PNUTS-PP1 complex during RNA polymerase II transcription pause-release. Dephosphorylation of C-terminus Thr and Ser residues by protein phosphatase-1 (PP1) triggers CDK9 activity, contributing to the activation of HIV-1 transcription. Post-translationally, N6-acetylation of Lys-44 promotes kinase activity, whereas acetylation of both Lys-44 and Lys-48 mediated by PCAF/KAT2B and GCN5/KAT2A reduces kinase activity. The acetylated form associates with PML bodies in the nuclear matrix and with the transcriptionally silent HIV-1 genome; deacetylated upon transcription stimulation. Deacetylated by SIRT7, promoting the kinase activity and subsequent 'Ser-2' phosphorylation of the C-terminal domain (CTD) of RNA polymerase II. Polyubiquitinated and thus activated by UBR5. This ubiquitination is promoted by TFIIS/TCEA1 and favors 'Ser-2' phosphorylation of RPB1/POLR2A CTD. Ubiquitous.

The protein localises to the nucleus. Its subcellular location is the cytoplasm. The protein resides in the PML body. The enzyme catalyses L-seryl-[protein] + ATP = O-phospho-L-seryl-[protein] + ADP + H(+). It carries out the reaction L-threonyl-[protein] + ATP = O-phospho-L-threonyl-[protein] + ADP + H(+). The catalysed reaction is [DNA-directed RNA polymerase] + ATP = phospho-[DNA-directed RNA polymerase] + ADP + H(+). Its activity is regulated as follows. Inhibited by CDKI-71, CR8, GPC-286199, AG-024322, flavopiridol (alvocidib), RBG-286147, anilinopyrimidine 32, arylazopyrazole 31b, indirubin 3'-monoxime, meriolin 3,P276-00, olomoucine II, pyrazolotriazine, meriolin, variolin, thiazolyl-pyrimidine, thiazolyl-pyrimidine, indirubin-30-monoxime, ZK 304709, AG-012986, AT7519, R547, RGB-286638, imidazole pyrimidine, EXEL-3700, EXEL-8647, 5,6-dichloro-1-b-ribofur-anosyl-benzimidazole (DRB), P276-00, roscovitine (seliciclib, CYC202) and SNS-032 (BMS-387032). Activation by Thr-186 phosphorylation is calcium Ca(2+) signaling pathway-dependent; actively inactivated by dephosphorylation mediated by PPP1CA, PPM1A and PPM1B. Reversibly repressed by acetylation at Lys-44 and Lys-48. Functionally, protein kinase involved in the regulation of transcription. Member of the cyclin-dependent kinase pair (CDK9/cyclin-T) complex, also called positive transcription elongation factor b (P-TEFb), which facilitates the transition from abortive to productive elongation by phosphorylating the CTD (C-terminal domain) of the large subunit of RNA polymerase II (RNAP II) POLR2A, SUPT5H and RDBP. This complex is inactive when in the 7SK snRNP complex form. Phosphorylates EP300, MYOD1, RPB1/POLR2A and AR and the negative elongation factors DSIF and NELFE. Regulates cytokine inducible transcription networks by facilitating promoter recognition of target transcription factors (e.g. TNF-inducible RELA/p65 activation and IL-6-inducible STAT3 signaling). Promotes RNA synthesis in genetic programs for cell growth, differentiation and viral pathogenesis. P-TEFb is also involved in cotranscriptional histone modification, mRNA processing and mRNA export. Modulates a complex network of chromatin modifications including histone H2B monoubiquitination (H2Bub1), H3 lysine 4 trimethylation (H3K4me3) and H3K36me3; integrates phosphorylation during transcription with chromatin modifications to control co-transcriptional histone mRNA processing. The CDK9/cyclin-K complex has also a kinase activity towards CTD of RNAP II and can substitute for CDK9/cyclin-T P-TEFb in vitro. Replication stress response protein; the CDK9/cyclin-K complex is required for genome integrity maintenance, by promoting cell cycle recovery from replication arrest and limiting single-stranded DNA amount in response to replication stress, thus reducing the breakdown of stalled replication forks and avoiding DNA damage. In addition, probable function in DNA repair of isoform 2 via interaction with KU70/XRCC6. Promotes cardiac myocyte enlargement. RPB1/POLR2A phosphorylation on 'Ser-2' in CTD activates transcription. AR phosphorylation modulates AR transcription factor promoter selectivity and cell growth. DSIF and NELF phosphorylation promotes transcription by inhibiting their negative effect. The phosphorylation of MYOD1 enhances its transcriptional activity and thus promotes muscle differentiation. Catalyzes phosphorylation of KAT5, promoting KAT5 recruitment to chromatin and histone acetyltransferase activity. The chain is Cyclin-dependent kinase 9 from Homo sapiens (Human).